We begin with the raw amino-acid sequence, 244 residues long: Phosphoadenosine 5'-phosphosulfate reductase (244 aa).

The active-site Nucleophile; cysteine thiosulfonate intermediate is the cysteine 239.

Belongs to the PAPS reductase family. CysH subfamily.

It localises to the cytoplasm. It catalyses the reaction [thioredoxin]-disulfide + sulfite + adenosine 3',5'-bisphosphate + 2 H(+) = [thioredoxin]-dithiol + 3'-phosphoadenylyl sulfate. Its pathway is sulfur metabolism; hydrogen sulfide biosynthesis; sulfite from sulfate: step 3/3. In terms of biological role, catalyzes the formation of sulfite from phosphoadenosine 5'-phosphosulfate (PAPS) using thioredoxin as an electron donor. In Enterobacter sp. (strain 638), this protein is Phosphoadenosine 5'-phosphosulfate reductase.